A 377-amino-acid polypeptide reads, in one-letter code: Chaperone protein DnaJ (377 aa).

The 65-residue stretch at 5-69 folds into the J domain; sequence DYYEVLGVSK…NKRANYDQFG (65 aa). The CR-type zinc finger occupies 134-216; sequence GTEKEISIRK…CHGKGTETKN (83 aa). Cysteine 147, cysteine 150, cysteine 164, cysteine 167, cysteine 190, cysteine 193, cysteine 204, and cysteine 207 together coordinate Zn(2+). 4 CXXCXGXG motif repeats span residues 147 to 154, 164 to 171, 190 to 197, and 204 to 211; these read CETCDGSG, CHYCNGSG, CPVCNGTG, and CPTCHGKG.

This sequence belongs to the DnaJ family. In terms of assembly, homodimer. The cofactor is Zn(2+).

The protein localises to the cytoplasm. Its function is as follows. Participates actively in the response to hyperosmotic and heat shock by preventing the aggregation of stress-denatured proteins and by disaggregating proteins, also in an autonomous, DnaK-independent fashion. Unfolded proteins bind initially to DnaJ; upon interaction with the DnaJ-bound protein, DnaK hydrolyzes its bound ATP, resulting in the formation of a stable complex. GrpE releases ADP from DnaK; ATP binding to DnaK triggers the release of the substrate protein, thus completing the reaction cycle. Several rounds of ATP-dependent interactions between DnaJ, DnaK and GrpE are required for fully efficient folding. Also involved, together with DnaK and GrpE, in the DNA replication of plasmids through activation of initiation proteins. The polypeptide is Chaperone protein DnaJ (Staphylococcus carnosus (strain TM300)).